A 337-amino-acid chain; its full sequence is Tryptophan--tRNA ligase 2 (337 aa).

Residues 13–15 (QPT) and 22–23 (GN) contribute to the ATP site. The 'HIGH' region signature appears at 14–23 (PTAGSFHLGN). Aspartate 139 is a binding site for L-tryptophan. ATP-binding positions include 151–153 (GED), isoleucine 190, and 199–203 (KMSKS). The short motif at 199–203 (KMSKS) is the 'KMSKS' region element.

This sequence belongs to the class-I aminoacyl-tRNA synthetase family. As to quaternary structure, homodimer.

It is found in the cytoplasm. The catalysed reaction is tRNA(Trp) + L-tryptophan + ATP = L-tryptophyl-tRNA(Trp) + AMP + diphosphate + H(+). Catalyzes the attachment of tryptophan to tRNA(Trp). The chain is Tryptophan--tRNA ligase 2 from Streptomyces avermitilis (strain ATCC 31267 / DSM 46492 / JCM 5070 / NBRC 14893 / NCIMB 12804 / NRRL 8165 / MA-4680).